A 1797-amino-acid polypeptide reads, in one-letter code: Non-reducing polyketide synthase nscA (1797 aa).

An N-terminal acylcarrier protein transacylase domain (SAT) region spans residues 17–256 (SDDLKDLFRR…PLPVYDGLCH (240 aa)). A Ketosynthase family 3 (KS3) domain is found at 392 to 825 (SSKLAIVGMA…GGNTTLLLED (434 aa)). Active-site for beta-ketoacyl synthase activity residues include Cys565, His700, and His743. Positions 931–1251 (FTGQGAYYSG…SLVTLHLAGL (321 aa)) are malonyl-CoA:ACP transacylase (MAT) domain. Residues 1318 to 1637 (TSLIHQITAE…RLLMDRFFSP (320 aa)) are product template (PT) domain. The N-terminal hotdog fold stretch occupies residues 1322–1458 (HQITAETIES…ATVRFEDPAA (137 aa)). A PKS/mFAS DH domain is found at 1322–1632 (HQITAETIES…FRRVPRLLMD (311 aa)). His1354 functions as the Proton acceptor; for dehydratase activity in the catalytic mechanism. The C-terminal hotdog fold stretch occupies residues 1482-1632 (VEGKASRLSK…FRRVPRLLMD (151 aa)). Asp1543 functions as the Proton donor; for dehydratase activity in the catalytic mechanism. Polar residues predominate over residues 1663 to 1686 (SVPEISAPSPSIVVSDSTANNTLT). Positions 1663–1723 (SVPEISAPSP…PESESAEPLG (61 aa)) are disordered. Residues 1698–1709 (SSSESSTPKESP) show a composition bias toward low complexity. The Carrier domain occupies 1720-1797 (EPLGNTVSQC…EMTAWIEEYC (78 aa)). Ser1757 carries the post-translational modification O-(pantetheine 4'-phosphoryl)serine.

Requires pantetheine 4'-phosphate as cofactor.

Its pathway is secondary metabolite biosynthesis. Non-reducing polyketide synthase; part of the gene cluster that mediates the biosynthesis of neosartoricin B, a prenylated anthracenone that probably exhibits T-cell antiproliferative activity, suggestive of a physiological role as an immunosuppressive agent. The non-reducing polyketide synthase nscA probably synthesizes and cyclizes the decaketide backbone. The hydrolase nscB then mediates the product release through hydrolysis followed by spontaneous decarboxylation. The prenyltransferase nscD catalyzes the addition of the dimethylallyl group to the aromatic C5. The FAD-dependent monooxygenase nscC is then responsible for the stereospecific hydroxylation at C2. Neosartoricin B can be converted into two additional compounds neosartoricins C and D. Neosartoricin C is a spirocyclic compound that is cyclized through the attack of C3 hydroxyl on C14, followed by dehydration. On the other hand, neosartoricin D is a further cyclized compound in which attack of C2 on C14 in neosartoricin C results in the formation of the acetal-containing dioxabicyclo-octanone ring. Both of these compounds are novel and possibly represent related metabolites of the gene cluster. In Arthroderma gypseum (strain ATCC MYA-4604 / CBS 118893) (Microsporum gypseum), this protein is Non-reducing polyketide synthase nscA.